We begin with the raw amino-acid sequence, 406 residues long: Serine/threonine transporter SstT (406 aa).

The next 9 membrane-spanning stretches (helical) occupy residues 15-35 (LVLQILVGIILGISLALVSPS), 47-67 (FVGALKAIAPILVFILVAASI), 81-101 (IIAMYLAGTFFAALTAVVLSF), 140-160 (ALMSANYIGILAWGVGLGLAL), 191-211 (FGIFGLVASTFATTGFDALAG), 215-235 (LLVVLLSAMAIIALIVNPAMV), 289-309 (IPLGATINMAGAAITITTLTL), 315-335 (MGIEVDLMTAILLSVVAAVSA), and 362-382 (IAMQVVAVGFIIGVIQDSAET).

It belongs to the dicarboxylate/amino acid:cation symporter (DAACS) (TC 2.A.23) family.

The protein localises to the cell inner membrane. It catalyses the reaction L-serine(in) + Na(+)(in) = L-serine(out) + Na(+)(out). The catalysed reaction is L-threonine(in) + Na(+)(in) = L-threonine(out) + Na(+)(out). In terms of biological role, involved in the import of serine and threonine into the cell, with the concomitant import of sodium (symport system). In Vibrio vulnificus (strain CMCP6), this protein is Serine/threonine transporter SstT.